We begin with the raw amino-acid sequence, 323 residues long: tRNA U34 carboxymethyltransferase (323 aa).

Residues Lys91, Trp105, Lys110, Gly130, Ile181–Glu182, Met196, Tyr200, and Arg315 each bind carboxy-S-adenosyl-L-methionine.

The protein belongs to the class I-like SAM-binding methyltransferase superfamily. CmoB family. As to quaternary structure, homotetramer.

The catalysed reaction is carboxy-S-adenosyl-L-methionine + 5-hydroxyuridine(34) in tRNA = 5-carboxymethoxyuridine(34) in tRNA + S-adenosyl-L-homocysteine + H(+). Catalyzes carboxymethyl transfer from carboxy-S-adenosyl-L-methionine (Cx-SAM) to 5-hydroxyuridine (ho5U) to form 5-carboxymethoxyuridine (cmo5U) at position 34 in tRNAs. The sequence is that of tRNA U34 carboxymethyltransferase from Sodalis glossinidius (strain morsitans).